The sequence spans 122 residues: Large ribosomal subunit protein uL14 (122 aa).

Belongs to the universal ribosomal protein uL14 family. As to quaternary structure, part of the 50S ribosomal subunit. Forms a cluster with proteins L3 and L19. In the 70S ribosome, L14 and L19 interact and together make contacts with the 16S rRNA in bridges B5 and B8.

In terms of biological role, binds to 23S rRNA. Forms part of two intersubunit bridges in the 70S ribosome. The polypeptide is Large ribosomal subunit protein uL14 (Baumannia cicadellinicola subsp. Homalodisca coagulata).